A 101-amino-acid chain; its full sequence is Synaptobrevin-B (101 aa).

Topologically, residues 1–76 are cytoplasmic; it reads MSNNPNNSGQ…RRQMWCRNMK (76 aa). The v-SNARE coiled-coil homology domain maps to 13–73; it reads KTQSILQEVD…VTIRRQMWCR (61 aa). Residues 77 to 97 form a helical; Anchor for type IV membrane protein membrane-spanning segment; the sequence is LQLIIIAVVILVLAVILIPII. The Vesicular segment spans residues 98-101; sequence MKFV.

The protein belongs to the synaptobrevin family.

The protein localises to the cytoplasmic vesicle. Its subcellular location is the secretory vesicle membrane. In terms of biological role, involved in the targeting and/or fusion of transport vesicles to their target membrane. This chain is Synaptobrevin-B (sybB), found in Dictyostelium discoideum (Social amoeba).